Reading from the N-terminus, the 309-residue chain is DDRGK domain-containing protein 1 (309 aa).

Residues 1–2 lie on the Lumenal side of the membrane; that stretch reads MD. A helical membrane pass occupies residues 3-23; that stretch reads LIILVGIAVALLVVIVTLYLL. The Cytoplasmic segment spans residues 24–309; sequence QKKNAAPETK…ISAGGGEASS (286 aa). 2 disordered regions span residues 32-53 and 79-175; these read TKVAAAPQRGVPQRAQEGVPRR and ALPA…KEER. Positions 87-96 are enriched in acidic residues; that stretch reads DHEDEGQVDG. The segment covering 107–175 has biased composition (basic and acidic residues); sequence LDEKMGAKKR…DAERLAKEER (69 aa). Residues 120 to 177 adopt a coiled-coil conformation; sequence EAKEQKRLQREQELHDREQRKVKEAKEEAERKQQEDLEAEAERKRVDAERLAKEERER.

This sequence belongs to the DDRGK1 family. As to quaternary structure, interacts with Atg9; the interaction is transient.

The protein localises to the endoplasmic reticulum membrane. Its function is as follows. Substrate adapter for ufmylation, the covalent attachment of the ubiquitin-like modifier UFM1 to substrate proteins. Required for ufmylation of Atg9; protects the nervous system during aging, possibly by stabilizing Atg9 and supporting its function. This Drosophila melanogaster (Fruit fly) protein is DDRGK domain-containing protein 1.